The primary structure comprises 555 residues: Intraflagellar transport protein 56 (555 aa).

TPR repeat units follow at residues 57-90 (LKNL…EDPD), 151-184 (IEDQ…HRDY), and 393-426 (DDFN…KYRN).

Belongs to the IFT56 family. As to quaternary structure, component of the IFT complex B.

It is found in the cell projection. Its subcellular location is the cilium. It localises to the flagellum. Its function is as follows. Component of the intraflagellar transport (IFT) complex B required for transport of proteins in the motile cilium. Required for transport of specific ciliary cargo proteins related to motility, while it is neither required for IFT complex B assembly or motion nor for cilium assembly. This is Intraflagellar transport protein 56 from Chlamydomonas reinhardtii (Chlamydomonas smithii).